The sequence spans 114 residues: DNA-directed RNA polymerase subunit Rpo4 (114 aa).

It belongs to the eukaryotic RPB4 RNA polymerase subunit family. In terms of assembly, part of the 13-subunit RNA polymerase complex. Forms a stalk with Rpo7 that extends from the main structure. In terms of processing, in purified enzyme appears as 5 forms, each differing by about 200 Da of a covalently bound, negatively charged residue. Not glycosylated.

The protein localises to the cytoplasm. It catalyses the reaction RNA(n) + a ribonucleoside 5'-triphosphate = RNA(n+1) + diphosphate. Functionally, DNA-dependent RNA polymerase catalyzes the transcription of DNA into RNA using the four ribonucleoside triphosphates as substrates. This subunit is less well bound than the others. Probably not involved in transcription initiation. This chain is DNA-directed RNA polymerase subunit Rpo4, found in Sulfolobus acidocaldarius (strain ATCC 33909 / DSM 639 / JCM 8929 / NBRC 15157 / NCIMB 11770).